The primary structure comprises 130 residues: Small ribosomal subunit protein uS8 (130 aa).

This sequence belongs to the universal ribosomal protein uS8 family. Part of the 30S ribosomal subunit. Contacts proteins S5 and S12.

Its function is as follows. One of the primary rRNA binding proteins, it binds directly to 16S rRNA central domain where it helps coordinate assembly of the platform of the 30S subunit. The sequence is that of Small ribosomal subunit protein uS8 from Cellvibrio japonicus (strain Ueda107) (Pseudomonas fluorescens subsp. cellulosa).